A 169-amino-acid chain; its full sequence is Putative phosphoesterase SERP0604 (169 aa).

His-34 functions as the Proton donor in the catalytic mechanism. 2 short sequence motifs (HXTX) span residues 34 to 37 and 115 to 118; these read HITI and HFTI. His-115 (proton acceptor) is an active-site residue.

The protein belongs to the 2H phosphoesterase superfamily. YjcG family.

In Staphylococcus epidermidis (strain ATCC 35984 / DSM 28319 / BCRC 17069 / CCUG 31568 / BM 3577 / RP62A), this protein is Putative phosphoesterase SERP0604.